A 110-amino-acid polypeptide reads, in one-letter code: MVVRSILLFIVAAVAEIGGAWLVWQGVREQRGLAWIGAGVIALGLYGFVATLQPDAHFGRILAAYGGIFVAGSLLWGMAFDGFRPDRADIVGALVCLAGVGVIMYAPRAH.

Helical transmembrane passes span 6–26 (ILLF…VWQG), 32–52 (GLAW…VATL), 61–81 (ILAA…MAFD), and 90–110 (IVGA…PRAH).

The protein belongs to the UPF0060 family.

It localises to the cell membrane. The sequence is that of UPF0060 membrane protein MMAR_2961 from Mycobacterium marinum (strain ATCC BAA-535 / M).